Here is a 518-residue protein sequence, read N- to C-terminus: E3 ubiquitin-protein ligase TRIM39 (518 aa).

The RING-type zinc-finger motif lies at 29 to 70; it reads CSVCLEYLKEPVIIECGHNFCKACITRWWEDLERDFPCPVCR. The segment at 102–143 adopts a B box-type zinc-finger fold; it reads RDESLCPQHHEALSLFCYEDQEAVCLICAISHTHRAHTVVPL. Positions 107, 110, 129, and 135 each coordinate Zn(2+). A coiled-coil region spans residues 181 to 250; it reads ELKRLVESRR…AHLAAEVEGK (70 aa). Interaction with CDKN1A stretches follow at residues 268 to 337 and 389 to 518; these read KNIP…QLIA and TSGR…TDWE. Residues 319–514 form the B30.2/SPRY domain; sequence SNFPRQYFAL…NAAPLTIRPP (196 aa).

Belongs to the TRIM/RBCC family. In terms of assembly, isoform 1 interacts with MOAP1. Isoform 1 and isoform 2 interact with CDKN1A. Isoform 2 interacts (via domain B box-type) with CACTIN. In terms of processing, autoubiquitinated. As to expression, ubiquitous; highly expressed in brain, heart, kidney, liver, skeletal muscle, spleen and testis.

It localises to the cytoplasm. Its subcellular location is the cytosol. The protein localises to the mitochondrion. It is found in the nucleus. It catalyses the reaction S-ubiquitinyl-[E2 ubiquitin-conjugating enzyme]-L-cysteine + [acceptor protein]-L-lysine = [E2 ubiquitin-conjugating enzyme]-L-cysteine + N(6)-ubiquitinyl-[acceptor protein]-L-lysine.. It participates in protein modification; protein ubiquitination. E3 ubiquitin-protein ligase. May facilitate apoptosis by inhibiting APC/C-Cdh1-mediated poly-ubiquitination and subsequent proteasome-mediated degradation of the pro-apoptotic protein MOAP1. Regulates the G1/S transition of the cell cycle and DNA damage-induced G2 arrest by stabilizing CDKN1A/p21. Positively regulates CDKN1A/p21 stability by competing with DTL for CDKN1A/p21 binding, therefore disrupting DCX(DTL) E3 ubiquitin ligase complex-mediated CDKN1A/p21 ubiquitination and degradation. Its function is as follows. Regulates the G1/S transition of the cell cycle and DNA damage-induced G2 arrest by stabilizing CDKN1A/p21. Positively regulates CDKN1A/p21 stability by competing with DTL for CDKN1A/p21 binding, therefore disrupting DCX(DTL) E3 ubiquitin ligase complex-mediated CDKN1A/p21 ubiquitination and degradation. Negatively regulates the canonical NF-kappa-B signaling pathway via stabilization of CACTIN in an ubiquitination-independent manner. The sequence is that of E3 ubiquitin-protein ligase TRIM39 (TRIM39) from Homo sapiens (Human).